Consider the following 546-residue polypeptide: Chaperonin GroEL (546 aa).

ATP contacts are provided by residues 30 to 33, Lys-51, 87 to 91, Gly-415, 479 to 481, and Asp-495; these read TLGP, DGTTT, and NAA. The segment at 527 to 546 is disordered; sequence DESAAPAMPGGMGGMGDMGM. A compositionally biased stretch (gly residues) spans 536–546; the sequence is GGMGGMGDMGM.

It belongs to the chaperonin (HSP60) family. As to quaternary structure, forms a cylinder of 14 subunits composed of two heptameric rings stacked back-to-back. Interacts with the co-chaperonin GroES.

It is found in the cytoplasm. The catalysed reaction is ATP + H2O + a folded polypeptide = ADP + phosphate + an unfolded polypeptide.. Functionally, together with its co-chaperonin GroES, plays an essential role in assisting protein folding. The GroEL-GroES system forms a nano-cage that allows encapsulation of the non-native substrate proteins and provides a physical environment optimized to promote and accelerate protein folding. This Acidovorax ebreus (strain TPSY) (Diaphorobacter sp. (strain TPSY)) protein is Chaperonin GroEL.